The sequence spans 429 residues: Glutamate-1-semialdehyde 2,1-aminomutase (429 aa).

K265 is modified (N6-(pyridoxal phosphate)lysine).

The protein belongs to the class-III pyridoxal-phosphate-dependent aminotransferase family. HemL subfamily. In terms of assembly, homodimer. Pyridoxal 5'-phosphate is required as a cofactor.

Its subcellular location is the cytoplasm. It catalyses the reaction (S)-4-amino-5-oxopentanoate = 5-aminolevulinate. The protein operates within porphyrin-containing compound metabolism; protoporphyrin-IX biosynthesis; 5-aminolevulinate from L-glutamyl-tRNA(Glu): step 2/2. In Legionella pneumophila (strain Corby), this protein is Glutamate-1-semialdehyde 2,1-aminomutase.